We begin with the raw amino-acid sequence, 1478 residues long: Phospholipase B1, membrane-associated (1478 aa).

The signal sequence occupies residues 1–27 (MELYPGVSPVGLLLLLLLGQGPSQIHG). Residues 28-1422 (SSGENTLAWQ…KAEEPSNALY (1395 aa)) are Extracellular-facing. 4 consecutive repeat copies span residues 43-351 (WTLK…YKNS), 366-711 (MKEG…TKNS), 712-1058 (NLGN…FRNS), and 1068-1407 (IENW…LRNS). The segment at 43–1407 (WTLKNFPFPC…RPFLYTLRNS (1365 aa)) is 4 X 308-326 AA approximate repeats. N-linked (GlcNAc...) asparagine glycosylation is present at asparagine 180. Active-site residues include serine 404 and aspartate 518. 3 N-linked (GlcNAc...) asparagine glycosylation sites follow: asparagine 525, asparagine 626, and asparagine 637. Histidine 659 is a catalytic residue. 10 N-linked (GlcNAc...) asparagine glycosylation sites follow: asparagine 715, asparagine 764, asparagine 787, asparagine 801, asparagine 830, asparagine 926, asparagine 1227, asparagine 1280, asparagine 1289, and asparagine 1387. The tract at residues 1408-1450 (QLLPDKAEEPSNALYWAVPVAAIGGLAVGILGVMLWRTVKPVQ) is necessary for membrane localization. A helical transmembrane segment spans residues 1423-1443 (WAVPVAAIGGLAVGILGVMLW). Over 1444–1478 (RTVKPVQQEEEEEDTLPNTSVTQDAVSEKRLKAGN) the chain is Cytoplasmic. Residues 1451-1478 (QEEEEEDTLPNTSVTQDAVSEKRLKAGN) are disordered. Over residues 1459–1468 (LPNTSVTQDA) the composition is skewed to polar residues. Residues 1469–1478 (VSEKRLKAGN) show a composition bias toward basic and acidic residues.

This sequence belongs to the 'GDSL' lipolytic enzyme family. Phospholipase B1 subfamily. In terms of processing, undergoes proteolytic cleavage in the ileum.

The protein localises to the apical cell membrane. It catalyses the reaction a 1,2-diacyl-sn-glycero-3-phosphocholine + H2O = a 1-acyl-sn-glycero-3-phosphocholine + a fatty acid + H(+). The catalysed reaction is a 1-O-alkyl-2-acyl-sn-glycero-3-phosphocholine + H2O = a 1-O-alkyl-sn-glycero-3-phosphocholine + a fatty acid + H(+). The enzyme catalyses a 1-acyl-sn-glycero-3-phosphocholine + H2O = sn-glycerol 3-phosphocholine + a fatty acid + H(+). It carries out the reaction a triacylglycerol + H2O = a diacylglycerol + a fatty acid + H(+). It catalyses the reaction 1,2-dihexadecanoyl-sn-glycero-3-phosphocholine + H2O = 1-hexadecanoyl-sn-glycero-3-phosphocholine + hexadecanoate + H(+). The catalysed reaction is 1-hexadecanoyl-2-(9Z-octadecenoyl)-sn-glycero-3-phosphocholine + H2O = 1-hexadecanoyl-sn-glycero-3-phosphocholine + (9Z)-octadecenoate + H(+). The enzyme catalyses 1,2-di-(9Z-octadecenoyl)-sn-glycero-3-phosphocholine + H2O = 1-(9Z-octadecenoyl)-sn-glycero-3-phosphocholine + (9Z)-octadecenoate + H(+). It carries out the reaction 1-hexadecanoyl-2-(9Z,12Z-octadecadienoyl)-sn-glycero-3-phosphocholine + H2O = (9Z,12Z)-octadecadienoate + 1-hexadecanoyl-sn-glycero-3-phosphocholine + H(+). It catalyses the reaction 1-hexadecanoyl-2-(9Z,12Z-octadecadienoyl)-sn-glycero-3-phosphocholine + H2O = 2-(9Z,12Z-octadecadienoyl)-sn-glycero-3-phosphocholine + hexadecanoate + H(+). The catalysed reaction is 1-hexadecanoyl-2-(9Z-octadecenoyl)-sn-glycero-3-phosphoethanolamine + H2O = 1-hexadecanoyl-sn-glycero-3-phosphoethanolamine + (9Z)-octadecenoate + H(+). The enzyme catalyses 1-hexadecanoyl-2-(9Z-octadecenoyl)-sn-glycero-3-phospho-(1'-sn-glycerol) + H2O = 1-hexadecanoyl-sn-glycero-3-phospho-(1'-sn-glycerol) + (9Z)-octadecenoate + H(+). It carries out the reaction 1,2-dihexadecanoyl-sn-glycero-3-phosphocholine + 2 H2O = sn-glycerol 3-phosphocholine + 2 hexadecanoate + 2 H(+). It catalyses the reaction 1-O-hexadecyl-2-(9Z)-octadecenoyl-sn-glycero-3-phosphocholine + H2O = 1-O-hexadecyl-sn-glycero-3-phosphocholine + (9Z)-octadecenoate + H(+). The catalysed reaction is 1-hexadecanoyl-sn-glycero-3-phosphocholine + H2O = sn-glycerol 3-phosphocholine + hexadecanoate + H(+). The enzyme catalyses 1,2,3-tri-(9Z-octadecenoyl)-glycerol + H2O = di-(9Z)-octadecenoylglycerol + (9Z)-octadecenoate + H(+). It carries out the reaction 1-hexadecanoyl-2-(9Z)-octadecenoyl-3-octadecanoyl-sn-glycerol + H2O = 1-hexadecanoyl-2-(9Z-octadecenoyl)-sn-glycerol + octadecanoate + H(+). It catalyses the reaction 1,3-dihexadecanoyl-2-(9Z-octadecenoyl)glycerol + H2O = 1,3-dihexadecanoylglycerol + (9Z)-octadecenoate + H(+). The catalysed reaction is 1,3-dihexadecanoyl-2-(9Z-octadecenoyl)glycerol + H2O = 1-hexadecanoyl-2-(9Z-octadecenoyl)-glycerol + hexadecanoate + H(+). The enzyme catalyses 1-hexadecanoyl-2-(9Z)-octadecenoyl-3-octadecanoyl-sn-glycerol + H2O = 1-hexadecanoyl-3-octadecanoyl-sn-glycerol + (9Z)-octadecenoate + H(+). It carries out the reaction 1-hexadecanoyl-2-(9Z)-octadecenoyl-3-octadecanoyl-sn-glycerol + H2O = 2-(9Z-octadecenoyl)-3-octadecanoyl-sn-glycerol + hexadecanoate + H(+). It catalyses the reaction 1-octadecanoyl-2-(9Z,12Z)-octadecadienoyl-sn-glycerol + H2O = 1-octadecanoyl-sn-glycerol + (9Z,12Z)-octadecadienoate + H(+). The catalysed reaction is 1,2-di-(9Z-octadecenoyl)-sn-glycerol + H2O = 1-(9Z-octadecenoyl)-sn-glycerol + (9Z)-octadecenoate + H(+). The enzyme catalyses 2,3-di-(9Z)-octadecenoyl-sn-glycerol + H2O = 3-(9Z-octadecenoyl)-sn-glycerol + (9Z)-octadecenoate + H(+). It carries out the reaction 1,3-di-(9Z-octadecenoyl)-glycerol + H2O = 1-(9Z-octadecenoyl)-glycerol + (9Z)-octadecenoate + H(+). It catalyses the reaction 1-(9Z-octadecenoyl)-glycerol + H2O = glycerol + (9Z)-octadecenoate + H(+). The catalysed reaction is 2-(9Z-octadecenoyl)-glycerol + H2O = glycerol + (9Z)-octadecenoate + H(+). Functionally, calcium-independent membrane-associated phospholipase that catalyzes complete diacylation of phospholipids by hydrolyzing both sn-1 and sn-2 fatty acyl chains attached to the glycerol backbone (phospholipase B activity). Has dual phospholipase and lysophospholipase activities toward diacylphospholipids. Preferentially cleaves sn-2 ester bonds over sn-1 bonds. Acts as a lipase toward glycerolipid substrates. Hydrolyzes fatty acyl chains of diacylglycerols with preference for the sn-2 position and of triacylglycerols with not positional selectivity. May also hydrolyze long chain retinyl esters such as retinyl palmitate. May contribute to digestion of dietary phospholipids, glycerolipids and retinoids, facilitating lipid absorption at the brush border. In Mus musculus (Mouse), this protein is Phospholipase B1, membrane-associated (Plb1).